The primary structure comprises 227 residues: MLQATCARIARRFVWRNRMPRRLFIGLFLLPLPLFAAPPKDELAYAVGARLGMRLQQEMPGLELSELLLGLRQAYRGEALEIPPERIEQLLLQHENATTETPRTTPAEARFLANEKARFGVRELTGGVLVSELRRGQGNGIGAATQVHVRYRGLLADGQVFDQSESAEWFALDSVIEGWRTALRAMPVGARWRVVIPSAQAYGHEGAGDLIPPDAPLVFEIDLLGFR.

In terms of domain architecture, PPIase FKBP-type spans 144–227; it reads ATQVHVRYRG…VFEIDLLGFR (84 aa).

The protein belongs to the FKBP-type PPIase family.

The enzyme catalyses [protein]-peptidylproline (omega=180) = [protein]-peptidylproline (omega=0). Its function is as follows. PPIases accelerate the folding of proteins. This chain is Probable FKBP-type 25 kDa peptidyl-prolyl cis-trans isomerase (fkl), found in Pseudomonas aeruginosa (strain ATCC 15692 / DSM 22644 / CIP 104116 / JCM 14847 / LMG 12228 / 1C / PRS 101 / PAO1).